The following is an 89-amino-acid chain: Acylphosphatase (89 aa).

One can recognise an Acylphosphatase-like domain in the interval 3–88 (TLHLQIEGRV…GEYSGFEKRS (86 aa)). Active-site residues include arginine 18 and asparagine 36.

It belongs to the acylphosphatase family.

It carries out the reaction an acyl phosphate + H2O = a carboxylate + phosphate + H(+). The chain is Acylphosphatase (acyP) from Thiobacillus denitrificans (strain ATCC 25259 / T1).